An 86-amino-acid chain; its full sequence is Cytochrome c oxidase subunit 6B1 (86 aa).

Residue Ala2 is modified to N-acetylalanine. Residues 27-73 (TRNCWQNYLDFHRCQKAMTAKGGDISVCEWYQRVYQSLCPTSWVTDW) enclose the CHCH domain. Residues 30-40 (CWQNYLDFHRC) carry the Cx9C motif motif. Cystine bridges form between Cys30/Cys65 and Cys40/Cys54. A Cx10C motif motif is present at residues 54–65 (CEWYQRVYQSLC).

This sequence belongs to the cytochrome c oxidase subunit 6B family. Component of the cytochrome c oxidase (complex IV, CIV), a multisubunit enzyme composed of 14 subunits. The complex is composed of a catalytic core of 3 subunits MT-CO1, MT-CO2 and MT-CO3, encoded in the mitochondrial DNA, and 11 supernumerary subunits COX4I1 (or COX4I2), COX5A, COX5B, COX6A1 (or COX6A2), COX6B1 (or COX6B2), COX6C, COX7A2 (or COX7A1), COX7B, COX7C, COX8A and NDUFA4, which are encoded in the nuclear genome. The complex exists as a monomer or a dimer and forms supercomplexes (SCs) in the inner mitochondrial membrane with NADH-ubiquinone oxidoreductase (complex I, CI) and ubiquinol-cytochrome c oxidoreductase (cytochrome b-c1 complex, complex III, CIII), resulting in different assemblies (supercomplex SCI(1)III(2)IV(1) and megacomplex MCI(2)III(2)IV(2)).

It localises to the mitochondrion inner membrane. Its pathway is energy metabolism; oxidative phosphorylation. Functionally, component of the cytochrome c oxidase, the last enzyme in the mitochondrial electron transport chain which drives oxidative phosphorylation. The respiratory chain contains 3 multisubunit complexes succinate dehydrogenase (complex II, CII), ubiquinol-cytochrome c oxidoreductase (cytochrome b-c1 complex, complex III, CIII) and cytochrome c oxidase (complex IV, CIV), that cooperate to transfer electrons derived from NADH and succinate to molecular oxygen, creating an electrochemical gradient over the inner membrane that drives transmembrane transport and the ATP synthase. Cytochrome c oxidase is the component of the respiratory chain that catalyzes the reduction of oxygen to water. Electrons originating from reduced cytochrome c in the intermembrane space (IMS) are transferred via the dinuclear copper A center (CU(A)) of subunit 2 and heme A of subunit 1 to the active site in subunit 1, a binuclear center (BNC) formed by heme A3 and copper B (CU(B)). The BNC reduces molecular oxygen to 2 water molecules using 4 electrons from cytochrome c in the IMS and 4 protons from the mitochondrial matrix. This is Cytochrome c oxidase subunit 6B1 (COX6B1) from Homo sapiens (Human).